Consider the following 921-residue polypeptide: TRPM8 channel-associated factor 1 (921 aa).

One can recognise a Peptidase M60 domain in the interval 542–841 (YCWMSTGLYI…TYLQLQEAFG (300 aa)).

The protein belongs to the TCAF family. Interacts with TRPM8 (via N-terminus and C-terminus domains); the interaction inhibits TRPM8 channel activity. Interacts with TRPV6. Isoform 2 is expressed in the prostate and strongly expressed in cancerous prostate samples.

Its subcellular location is the cell membrane. Its function is as follows. Positively regulates the plasma membrane cation channel TRPM8 activity. Involved in the recruitment of TRPM8 to the cell surface. Promotes prostate cancer cell migration inhibition in a TRPM8-dependent manner. In Homo sapiens (Human), this protein is TRPM8 channel-associated factor 1.